A 128-amino-acid polypeptide reads, in one-letter code: Histone H2A type 1-J (128 aa).

The tract at residues 1–22 (MSGRGKQGGKARAKAKTRSSRA) is disordered. N-acetylserine is present on serine 2. The residue at position 2 (serine 2) is a Phosphoserine; by RPS6KA5. Citrulline; alternate is present on arginine 4. Position 4 is a symmetric dimethylarginine; by PRMT5; alternate (arginine 4). Lysine 6 is subject to N6-(2-hydroxyisobutyryl)lysine. Over residues 7 to 19 (QGGKARAKAKTRS) the composition is skewed to basic residues. Lysine 10 carries the post-translational modification N6-(2-hydroxyisobutyryl)lysine; alternate. Lysine 10 and lysine 14 each carry N6-(beta-hydroxybutyryl)lysine; alternate. At lysine 10 the chain carries N6-lactoyllysine; alternate. Position 10 is an N6-succinyllysine; alternate (lysine 10). Lysine 14 participates in a covalent cross-link: Glycyl lysine isopeptide (Lys-Gly) (interchain with G-Cter in ubiquitin); alternate. Lysine 16 participates in a covalent cross-link: Glycyl lysine isopeptide (Lys-Gly) (interchain with G-Cter in ubiquitin). The residue at position 37 (lysine 37) is an N6-(2-hydroxyisobutyryl)lysine; alternate. At lysine 37 the chain carries N6-(beta-hydroxybutyryl)lysine; alternate. Position 37 is an N6-crotonyllysine; alternate (lysine 37). An N6-(2-hydroxyisobutyryl)lysine mark is found at lysine 75 and lysine 76. Lysine 96 is modified (N6-(2-hydroxyisobutyryl)lysine; alternate). An N6-(beta-hydroxybutyryl)lysine; alternate modification is found at lysine 96. Lysine 96 is modified (N6-succinyllysine; alternate). An N6-glutaryllysine; alternate modification is found at lysine 96. N6-glutaryllysine is present on lysine 100. The residue at position 105 (glutamine 105) is an N5-methylglutamine. Lysine 119 is subject to N6-(2-hydroxyisobutyryl)lysine; alternate. Position 119 is an N6-(beta-hydroxybutyryl)lysine; alternate (lysine 119). Lysine 119 and lysine 120 each carry N6-crotonyllysine; alternate. Residues lysine 119 and lysine 120 each carry the N6-glutaryllysine; alternate modification. Lysine 120 participates in a covalent cross-link: Glycyl lysine isopeptide (Lys-Gly) (interchain with G-Cter in ubiquitin); alternate. A Phosphothreonine; by DCAF1 modification is found at threonine 121. Lysine 126 carries the post-translational modification N6-crotonyllysine; alternate. Residue lysine 126 is modified to N6-glutaryllysine; alternate.

Belongs to the histone H2A family. In terms of assembly, the nucleosome is a histone octamer containing two molecules each of H2A, H2B, H3 and H4 assembled in one H3-H4 heterotetramer and two H2A-H2B heterodimers. The octamer wraps approximately 147 bp of DNA. In terms of processing, deiminated on Arg-4 in granulocytes upon calcium entry. Post-translationally, monoubiquitination of Lys-120 (H2AK119Ub) by RING1, TRIM37 and RNF2/RING2 complex gives a specific tag for epigenetic transcriptional repression and participates in X chromosome inactivation of female mammals. It is involved in the initiation of both imprinted and random X inactivation. Ubiquitinated H2A is enriched in inactive X chromosome chromatin. Ubiquitination of H2A functions downstream of methylation of 'Lys-27' of histone H3 (H3K27me). H2AK119Ub by RNF2/RING2 can also be induced by ultraviolet and may be involved in DNA repair. Monoubiquitination of Lys-120 (H2AK119Ub) by TRIM37 may promote transformation of cells in a number of breast cancers. Following DNA double-strand breaks (DSBs), it is ubiquitinated through 'Lys-63' linkage of ubiquitin moieties by the E2 ligase UBE2N and the E3 ligases RNF8 and RNF168, leading to the recruitment of repair proteins to sites of DNA damage. Ubiquitination at Lys-14 and Lys-16 (H2AK13Ub and H2AK15Ub, respectively) in response to DNA damage is initiated by RNF168 that mediates monoubiquitination at these 2 sites, and 'Lys-63'-linked ubiquitin are then conjugated to monoubiquitin; RNF8 is able to extend 'Lys-63'-linked ubiquitin chains in vitro. Deubiquitinated by USP51 at Lys-14 and Lys-16 (H2AK13Ub and H2AK15Ub, respectively) after damaged DNA is repaired. H2AK119Ub and ionizing radiation-induced 'Lys-63'-linked ubiquitination (H2AK13Ub and H2AK15Ub) are distinct events. Phosphorylation on Ser-2 (H2AS1ph) is enhanced during mitosis. Phosphorylation on Ser-2 by RPS6KA5/MSK1 directly represses transcription. Acetylation of H3 inhibits Ser-2 phosphorylation by RPS6KA5/MSK1. Phosphorylation at Thr-121 (H2AT120ph) by DCAF1 is present in the regulatory region of many tumor suppresor genes and down-regulates their transcription. In terms of processing, glutamine methylation at Gln-105 (H2AQ104me) by FBL is specifically dedicated to polymerase I. It is present at 35S ribosomal DNA locus and impairs binding of the FACT complex. Post-translationally, symmetric dimethylation on Arg-4 by the PRDM1/PRMT5 complex may play a crucial role in the germ-cell lineage. Crotonylation (Kcr) is specifically present in male germ cells and marks testis-specific genes in post-meiotic cells, including X-linked genes that escape sex chromosome inactivation in haploid cells. Crotonylation marks active promoters and enhancers and confers resistance to transcriptional repressors. It is also associated with post-meiotically activated genes on autosomes. In terms of processing, lactylated in macrophages by EP300/P300 by using lactoyl-CoA directly derived from endogenous or exogenous lactate, leading to stimulates gene transcription.

It localises to the nucleus. Its subcellular location is the chromosome. Core component of nucleosome. Nucleosomes wrap and compact DNA into chromatin, limiting DNA accessibility to the cellular machineries which require DNA as a template. Histones thereby play a central role in transcription regulation, DNA repair, DNA replication and chromosomal stability. DNA accessibility is regulated via a complex set of post-translational modifications of histones, also called histone code, and nucleosome remodeling. This Homo sapiens (Human) protein is Histone H2A type 1-J.